Reading from the N-terminus, the 99-residue chain is Mu-hexatoxin-Mg1c (99 aa).

3 disulfide bridges follow: Cys61/Cys75, Cys68/Cys80, and Cys74/Cys94.

The protein belongs to the neurotoxin 14 (magi-1) family. 09 (magi-1) subfamily. In terms of tissue distribution, expressed by the venom gland.

The protein resides in the secreted. Functionally, inhibits voltage-gated sodium channels by binding to site 3. Insecticidal neurotoxin. The polypeptide is Mu-hexatoxin-Mg1c (Macrothele gigas (Japanese funnel web spider)).